A 440-amino-acid polypeptide reads, in one-letter code: Fibulin-7 (440 aa).

Positions 1 to 24 are cleaved as a signal peptide; that stretch reads MGPGSQRALFLLLLLLASPGARAF. Positions 28–73 form a coiled coil; it reads LNKQQLLTTIRQLQQLLKGQETRFTEGIRNMKSRLAALQNTVNKMT. The 58-residue stretch at 79–136 folds into the Sushi domain; sequence VSCPALEAPPDGKKFGSKYLVDHEVYFTCNPGFQLVGPSSVVCLANGSWTGEQPRCRD. 11 disulfides stabilise this stretch: C81–C121, C107–C134, C140–C151, C145–C160, C162–C171, C229–C245, C241–C254, C256–C269, C275–C288, C282–C297, and C302–C319. N-linked (GlcNAc...) asparagine glycosylation occurs at N124. The EGF-like 1; calcium-binding domain maps to 136 to 172; sequence DISECSSQPCHNGGTCVEGINHYRCICPPGKTGNRCQ. Residues 225-270 form the EGF-like 2; calcium-binding domain; the sequence is DVNECEIYGQKGRPRLCMHACVNTPGSYRCTCPSGYRILADGKSCE. Positions 271 to 320 constitute an EGF-like 3; calcium-binding domain; sequence DVDECAGPQHMCPRGTTCINTGGGFQCVNPECPEGSGNISYVKTSPFQCE. A glycan (N-linked (GlcNAc...) asparagine) is linked at N308.

The protein belongs to the fibulin family. Interacts with heparin, FBLN1, FN1 and DSPP. Preferentially binds dental mesenchyme cells and odontoblasts but not dental epithelial cells or nondental cells. Binding requires a heparan sulfate-containing receptor on the cell surface as well as an integrin. In terms of processing, N-glycosylated. As to expression, highly expressed in newborn incisors and molars. A weaker expression is seen in the brain, kidneys, muscles and bones.

The protein resides in the secreted. It is found in the extracellular space. The protein localises to the extracellular matrix. Its function is as follows. An adhesion molecule that interacts with extracellular matrix molecules in developing teeth and may play important roles in differentiation and maintenance of odontoblasts as well as in dentin formation. This Mus musculus (Mouse) protein is Fibulin-7 (Fbln7).